Here is a 27-residue protein sequence, read N- to C-terminus: Natriuretic peptides A (27 aa).

C7 and C23 are disulfide-bonded.

Belongs to the natriuretic peptide family.

The protein localises to the secreted. Hormone playing a key role in cardiovascular homeostasis through regulation of natriuresis, diuresis, and vasodilation. Has a cGMP-stimulating activity. The protein is Natriuretic peptides A (nppa) of Anguilla japonica (Japanese eel).